The chain runs to 334 residues: Putative peptide import ATP-binding protein BAB2_1053 (334 aa).

The region spanning 22–272 is the ABC transporter domain; that stretch reads VRTDDLVRDF…PLHPYSRALL (251 aa). 64-71 lines the ATP pocket; that stretch reads GESGSGKS.

Belongs to the ABC transporter superfamily. The complex is composed of two ATP-binding proteins (BAB2_1052 and BAB2_1053), two transmembrane proteins (BAB2_1050 and BAB2_1051) and a solute-binding protein (BAB2_1049).

The protein localises to the cell inner membrane. Functionally, probably part of an ABC transporter complex that could be involved in peptide import. Probably responsible for energy coupling to the transport system. The chain is Putative peptide import ATP-binding protein BAB2_1053 from Brucella abortus (strain 2308).